A 362-amino-acid polypeptide reads, in one-letter code: Class I histocompatibility antigen, Gogo-B*0103 alpha chain (362 aa).

The N-terminal stretch at 1–24 (MRVTAPRTLLLLLSAALALTETWA) is a signal peptide. Residues 25-114 (GSHSMRYFDT…ALRYYNQSEA (90 aa)) are alpha-1. Residues 25–308 (GSHSMRYFDT…EPSSQSTIPI (284 aa)) are Extracellular-facing. N-linked (GlcNAc...) asparagine glycosylation is present at N110. Positions 115–206 (GSHTIQWMYG…ENGRETLQRA (92 aa)) are alpha-2. Cystine bridges form between C125–C188 and C227–C283. The alpha-3 stretch occupies residues 207–298 (DTPKTHVTHH…GLPKPLTLRW (92 aa)). An Ig-like C1-type domain is found at 209–295 (PKTHVTHHPI…QHEGLPKPLT (87 aa)). The tract at residues 299-308 (EPSSQSTIPI) is connecting peptide. The helical transmembrane segment at 309-332 (VGIVAGLAVLAVVVIGAVVTAVIC) threads the bilayer. Residues 333-362 (RRKSSGGKGGSYSQAASSDSAQGSDVSLTA) are Cytoplasmic-facing. A disordered region spans residues 335 to 362 (KSSGGKGGSYSQAASSDSAQGSDVSLTA). The segment covering 343 to 362 (SYSQAASSDSAQGSDVSLTA) has biased composition (low complexity).

Belongs to the MHC class I family. Heterodimer of an alpha chain and a beta chain (beta-2-microglobulin).

The protein resides in the membrane. Functionally, involved in the presentation of foreign antigens to the immune system. This chain is Class I histocompatibility antigen, Gogo-B*0103 alpha chain, found in Gorilla gorilla gorilla (Western lowland gorilla).